The chain runs to 208 residues: FMN-dependent NADH:quinone oxidoreductase (208 aa).

FMN-binding positions include His-10, Ser-17–Ser-19, Met-104–Leu-107, Ser-148–Tyr-153, and Asp-184.

The protein belongs to the azoreductase type 1 family. In terms of assembly, homodimer. FMN is required as a cofactor.

It carries out the reaction 2 a quinone + NADH + H(+) = 2 a 1,4-benzosemiquinone + NAD(+). The catalysed reaction is N,N-dimethyl-1,4-phenylenediamine + anthranilate + 2 NAD(+) = 2-(4-dimethylaminophenyl)diazenylbenzoate + 2 NADH + 2 H(+). Its function is as follows. Quinone reductase that provides resistance to thiol-specific stress caused by electrophilic quinones. Functionally, also exhibits azoreductase activity. Catalyzes the reductive cleavage of the azo bond in aromatic azo compounds to the corresponding amines. Requires NADH, but not NADPH, as an electron donor for its activity. The enzyme can also reduce a wide range of sulfonated azo dyes. The substrate preference order is methyl Red &gt; Orange II &gt; Ponceau BS &gt; Ponceau S &gt; Orange G &gt; Amaranth. This is FMN-dependent NADH:quinone oxidoreductase from Enterococcus faecalis (strain ATCC 700802 / V583).